The sequence spans 357 residues: Acyl-coenzyme A diphosphatase NUDT19 (357 aa).

The Nudix hydrolase domain maps to 10–242; the sequence is AATVMLAAGW…IWLAPPQFYE (233 aa). A Nudix box motif is present at residues 97–118; that stretch reads AALPDDVALRICAIRETFEEAG. The Mg(2+) site is built by glutamate 112 and glutamate 116. An N6-succinyllysine modification is found at lysine 300. The Microbody targeting signal signature appears at 355–357; that stretch reads ARL.

It belongs to the Nudix hydrolase family. Monomer. Requires Mg(2+) as cofactor. The cofactor is Mn(2+).

The protein resides in the peroxisome. The catalysed reaction is an acyl-CoA + H2O = an acyl-4'-phosphopantetheine + adenosine 3',5'-bisphosphate + 2 H(+). It catalyses the reaction CoA + H2O = (R)-4'-phosphopantetheine + adenosine 3',5'-bisphosphate + 2 H(+). The enzyme catalyses hexanoyl-CoA + H2O = hexanoyl-4'-phosphopantetheine + adenosine 3',5'-bisphosphate + 2 H(+). It carries out the reaction octanoyl-CoA + H2O = S-octanoyl-4'-phosphopantetheine + adenosine 3',5'-bisphosphate + 2 H(+). The catalysed reaction is butanoyl-CoA + H2O = S-butanoyl-4'-phosphopantetheine + adenosine 3',5'-bisphosphate + 2 H(+). It catalyses the reaction propanoyl-CoA + H2O = propanoyl-4'-phosphopantetheine + adenosine 3',5'-bisphosphate + 2 H(+). The enzyme catalyses malonyl-CoA + H2O = malonyl-4'-phosphopantetheine + adenosine 3',5'-bisphosphate + 2 H(+). It carries out the reaction succinyl-CoA + H2O = succinyl-4'-phosphopantetheine + adenosine 3',5'-bisphosphate + 2 H(+). The catalysed reaction is choloyl-CoA + H2O = S-choloyl-4'-phosphopantetheine + adenosine 3',5'-bisphosphate + 2 H(+). It catalyses the reaction 4,8-dimethylnonanoyl-CoA + H2O = S-(4,8-dimethylnonanoyl)-4'-phosphopantetheine + adenosine 3',5'-bisphosphate + 2 H(+). The enzyme catalyses (9Z,12Z,15Z)-octadecatrienoyl-CoA + H2O = S-(9Z,12Z,15Z-octadecatrienoyl)-4'-phosphopantetheine + adenosine 3',5'-bisphosphate + 2 H(+). It carries out the reaction (9Z,12Z)-octadecadienoyl-CoA + H2O = S-(9Z,12Z-octadecadienoyl)-4'-phosphopantetheine + adenosine 3',5'-bisphosphate + 2 H(+). The catalysed reaction is (9Z)-hexadecenoyl-CoA + H2O = S-(9Z-hexadecenoyl)-4'-phosphopantetheine + adenosine 3',5'-bisphosphate + 2 H(+). It catalyses the reaction (9Z)-tetradecenoyl-CoA + H2O = S-(9Z-tetradecenoyl)-4'-phosphopantetheine + adenosine 3',5'-bisphosphate + 2 H(+). The enzyme catalyses (6Z)-octenoyl-CoA + H2O = S-(6Z-octenoyl)-4'-phosphopantetheine + adenosine 3',5'-bisphosphate + 2 H(+). It carries out the reaction hexadecanoyl-CoA + H2O = S-hexadecanoyl-4'-phosphopantetheine + adenosine 3',5'-bisphosphate + 2 H(+). The catalysed reaction is tetradecanoyl-CoA + H2O = tetradecanoyl-4'-phosphopantetheine + adenosine 3',5'-bisphosphate + 2 H(+). It catalyses the reaction dodecanoyl-CoA + H2O = S-dodecanoyl-4'-phosphopantetheine + adenosine 3',5'-bisphosphate + 2 H(+). The enzyme catalyses a 5'-end CoA-ribonucleoside in mRNA + H2O = a 5'-end phospho-adenosine-phospho-ribonucleoside in mRNA + (R)-4'-phosphopantetheine + 2 H(+). Its function is as follows. Fatty acyl-coenzyme A (CoA) diphosphatase that hydrolyzes fatty acyl-CoA to yield acyl-4'-phosphopantetheine and adenosine 3',5'-bisphosphate. Mediates the hydrolysis of a wide range of CoA esters, including choloyl-CoA and branched-chain fatty-acyl-CoA esters and at low substrate concentrations medium and long-chain fatty-acyl-CoA esters are the primary substrates. Highest activity seen with medium-chain acyl-CoA esters and higher rates of activity seen with the unsaturated acyl-CoA esters compared with the saturated esters. Exhibits decapping activity towards dpCoA-capped RNAs in vitro. This is Acyl-coenzyme A diphosphatase NUDT19 (Nudt19) from Rattus norvegicus (Rat).